The following is a 1470-amino-acid chain: Histone acetyltransferase HAC4 (1470 aa).

A compositionally biased stretch (polar residues) spans 1 to 10; the sequence is MNNNKEVPQN. Disordered stretches follow at residues 1 to 20 and 342 to 376; these read MNNNKEVPQNSVAVSSSSSA and TNFQSAPNNRDNLPQVSQQLSNHGSRQHRGQHSQN. Positions 11–20 are enriched in low complexity; that stretch reads SVAVSSSSSA. The segment covering 342–365 has biased composition (polar residues); it reads TNFQSAPNNRDNLPQVSQQLSNHG. A TAZ-type 1 zinc finger spans residues 416–495; it reads GQTSSNTVLR…SISCRTCVAV (80 aa). The interval 518-566 is disordered; the sequence is SSKCQPKKSSKSRQAYKKGGAEAPSVDADLQRSIKRPKLHRPSQNITPE. The span at 522–533 shows a compositional bias: basic residues; it reads QPKKSSKSRQAY. Residues 764 to 841 form a PHD-type zinc finger; sequence HYVCAPCYNE…KYTCPSCYIQ (78 aa). Residues 856–1293 form the CBP/p300-type HAT domain; the sequence is VPGATSLPVT…ILYHLHNPTA (438 aa). Acetyl-CoA contacts are provided by residues 979–981, 998–999, and Trp-1054; these read LDS and RT. ZZ-type zinc fingers lie at residues 1175-1238 and 1295-1347; these read HLQH…IKDV and AFAT…SSTD. Zn(2+) is bound by residues Cys-1180, Cys-1183, Cys-1195, Cys-1198, Cys-1204, Cys-1207, His-1220, His-1228, Cys-1300, Cys-1303, Cys-1315, Cys-1318, Cys-1324, Cys-1327, His-1335, and His-1337. The TAZ-type 2 zinc-finger motif lies at 1358–1436; that stretch reads SQSYQVKLEK…KCTVPKCSGL (79 aa).

As to expression, rosette leaves, stems and flowers.

Its subcellular location is the nucleus. The enzyme catalyses L-lysyl-[protein] + acetyl-CoA = N(6)-acetyl-L-lysyl-[protein] + CoA + H(+). Functionally, acetyltransferase enzyme. Acetylates histones, giving a specific tag for transcriptional activation. The chain is Histone acetyltransferase HAC4 (HAC4) from Arabidopsis thaliana (Mouse-ear cress).